The following is a 123-amino-acid chain: Ribosome-binding factor A (123 aa).

It belongs to the RbfA family. As to quaternary structure, monomer. Binds 30S ribosomal subunits, but not 50S ribosomal subunits or 70S ribosomes.

The protein localises to the cytoplasm. Functionally, one of several proteins that assist in the late maturation steps of the functional core of the 30S ribosomal subunit. Associates with free 30S ribosomal subunits (but not with 30S subunits that are part of 70S ribosomes or polysomes). Required for efficient processing of 16S rRNA. May interact with the 5'-terminal helix region of 16S rRNA. This Ralstonia pickettii (strain 12J) protein is Ribosome-binding factor A.